Consider the following 466-residue polypeptide: Glycine--tRNA ligase (466 aa).

Positions 104 and 178 each coordinate substrate. Residues R210–E212, F220–F225, E294–L295, and G338–R341 contribute to the ATP site. Substrate is bound at residue F225–E229. Residue E334–G338 coordinates substrate.

The protein belongs to the class-II aminoacyl-tRNA synthetase family. In terms of assembly, homodimer.

It is found in the cytoplasm. The catalysed reaction is tRNA(Gly) + glycine + ATP = glycyl-tRNA(Gly) + AMP + diphosphate. Its function is as follows. Catalyzes the attachment of glycine to tRNA(Gly). This Geobacillus thermodenitrificans (strain NG80-2) protein is Glycine--tRNA ligase.